The following is a 224-amino-acid chain: Ornithine decarboxylase antizyme (224 aa).

Belongs to the ODC antizyme family. In terms of assembly, interacts with ODC and thereby sterically blocks ODC homodimerization.

Its function is as follows. Ornithine decarboxylase (ODC) antizyme protein that negatively regulates ODC activity and intracellular polyamine biosynthesis in response to increased intracellular polyamine levels. Binds to ODC monomers, inhibiting the assembly of the functional ODC homodimer, and targets the monomers for ubiquitin-independent proteolytic destruction by the 26S proteasome. In Schizosaccharomyces octosporus (Fission yeast), this protein is Ornithine decarboxylase antizyme (spa1).